The following is a 683-amino-acid chain: Cytochrome P450 monooxygenase htyF (683 aa).

A helical membrane pass occupies residues 8 to 28 (PALLAASVVLAVSLVSYVIQL). Asn-29 is a glycosylation site (N-linked (GlcNAc...) asparagine). Position 481 (Cys-481) interacts with heme. Asn-581 is a glycosylation site (N-linked (GlcNAc...) asparagine). A helical membrane pass occupies residues 588–608 (LYVFVVLVACVAALFIGIGIY).

Belongs to the cytochrome P450 family. The cofactor is heme.

The protein localises to the membrane. Its pathway is antifungal biosynthesis. In terms of biological role, cytochrome P450 monooxygenase; part of the gene cluster that mediates the de novo generation of L-homotyrosine from acetyl-CoA and 4-hydroxyphenyl-pyruvate. L-homotyrosine is a building block of echinocandin B, a fungal lipidated cyclic hexapeptide that acts as an antifungal agent. L-homotyrosine 4-hydroxyphenyl-pyruvate first undergoes an aldol-type condensation by htyA with the C-2 of acetyl-CoA followed by the release of CoA to form 2-(4-hydroxybenzyl)-malate. This is followed by isomerization of 2-(4-hydroxy-benzyl)-malate to 3-(4-hydroxybenzyl)-malate by htyD. Thereafter, 3-(4-hydroxybenzyl)-malate undergoes decarboxylation and oxidation to form 2-oxo-4-(4-hydroxybenzyl)butanoic acid, coupled to reduction of NAD(+) to NADH by htyC. The product then undergoes transamination catalyzed by htyB to form L-homotyrosine. The protein is Cytochrome P450 monooxygenase htyF of Aspergillus rugulosus (Emericella rugulosa).